The chain runs to 148 residues: NADPH-dependent 7-cyano-7-deazaguanine reductase (148 aa).

The Thioimide intermediate role is filled by Cys-50. Catalysis depends on Asp-57, which acts as the Proton donor. Substrate-binding positions include 72–74 (VES) and 91–92 (HE).

Belongs to the GTP cyclohydrolase I family. QueF type 1 subfamily.

The protein resides in the cytoplasm. The enzyme catalyses 7-aminomethyl-7-carbaguanine + 2 NADP(+) = 7-cyano-7-deazaguanine + 2 NADPH + 3 H(+). It participates in tRNA modification; tRNA-queuosine biosynthesis. Catalyzes the NADPH-dependent reduction of 7-cyano-7-deazaguanine (preQ0) to 7-aminomethyl-7-deazaguanine (preQ1). This chain is NADPH-dependent 7-cyano-7-deazaguanine reductase, found in Helicobacter pylori (strain ATCC 700392 / 26695) (Campylobacter pylori).